Consider the following 74-residue polypeptide: CLAVATA3/ESR (CLE)-related protein 19 (74 aa).

The N-terminal stretch at 1 to 24 is a signal peptide; that stretch reads MKIKGLMILASSLLILAFIHQSES. Residues Asn34 and Asn54 are each glycosylated (N-linked (GlcNAc...) asparagine). 2 positions are modified to hydroxyproline: Pro65 and Pro68. A glycan (O-linked (Ara...) hydroxyproline) is linked at Pro68.

Belongs to the CLV3/ESR signal peptide family. The O-glycosylation (arabinosylation) of the hydroxyproline Pro-68 enhances binding affinity of the CLE19p peptide for its receptor. As to expression, mostly expressed in heart-shape embryos, pollen and young flower buds, and, to a lower extent, in inflorescence, leaves and roots.

It localises to the secreted. It is found in the extracellular space. In terms of biological role, extracellular signal peptide that regulates cell fate. Represses root apical meristem maintenance. In Arabidopsis thaliana (Mouse-ear cress), this protein is CLAVATA3/ESR (CLE)-related protein 19.